Here is a 356-residue protein sequence, read N- to C-terminus: Histidinol-phosphate aminotransferase (356 aa).

Position 210 is an N6-(pyridoxal phosphate)lysine (K210).

The protein belongs to the class-II pyridoxal-phosphate-dependent aminotransferase family. Histidinol-phosphate aminotransferase subfamily. As to quaternary structure, homodimer. It depends on pyridoxal 5'-phosphate as a cofactor.

The catalysed reaction is L-histidinol phosphate + 2-oxoglutarate = 3-(imidazol-4-yl)-2-oxopropyl phosphate + L-glutamate. Its pathway is amino-acid biosynthesis; L-histidine biosynthesis; L-histidine from 5-phospho-alpha-D-ribose 1-diphosphate: step 7/9. This Gluconacetobacter diazotrophicus (strain ATCC 49037 / DSM 5601 / CCUG 37298 / CIP 103539 / LMG 7603 / PAl5) protein is Histidinol-phosphate aminotransferase.